The sequence spans 854 residues: Protein unc-33 (854 aa).

3 disordered regions span residues 57–114 (ETVS…IPAP), 130–327 (ELFG…DGNG), and 794–854 (VERV…TGFW). Composition is skewed to polar residues over residues 58 to 68 (TVSNKSRSSEG) and 75 to 97 (RPNS…TSAR). Over residues 193–202 (KVLRGEKSTP) the composition is skewed to basic and acidic residues. A compositionally biased stretch (acidic residues) spans 240–257 (VDDEEEPEAEAQEMEEPQ). Residues 279–298 (HPSEDGDSTRNGETPTDRRN) are compositionally biased toward basic and acidic residues. Positions 802 to 811 (SSQQQKPQQN) are enriched in polar residues. Over residues 816 to 827 (NSGDFDRNRTKV) the composition is skewed to basic and acidic residues.

This sequence belongs to the metallo-dependent hydrolases superfamily. Hydantoinase/dihydropyrimidinase family. In terms of assembly, isoform a: Probable monomer. Isoform b: Probable homodimer. Isoform c: Probable homodimer. Probable heterodimer composed of isoform b and isoform c. Interacts with unc-14 and kinesin-1 motor complex light chain klc-1; both interactions regulate unc-33 neurite localization. Interacts with fln-1 (via calponin-homology (CH) domains and filamin repeat 18-19). Isoform c: Interacts with vab-8 isoform a. In terms of tissue distribution, expressed in ventral cord and nerve ring (at protein level). Isoform a: Expressed in nerve ring (at protein level). Expressed in the nervous system, two amphid socket cells and weakly in non-neuronal pharyngeal cells.

The protein resides in the cell projection. The protein localises to the axon. It is found in the dendrite. In terms of biological role, during neurogenesis, plays an essential role in axonal guidance and outgrowth by regulating the polarization of both microtubule and actin cytoskeletons. Establishes the asymmetry of axonal and dendrite microtubules and the polarized sorting of neuronal proteins. This is achieved in part by regulating the localization of kinesin-like protein unc-104. In neurons without a distal microtubule-organizing center (MTOC), also controls the organization of microtubules in dendrites. During the dorso-ventral axonal guidance and outgrowth of VD neurons, required downstream of Rac GTPases ced-10 and mig-2 to inhibit growth cone filopodial protrusion mediated by the unc-6/netrin receptor unc-40-unc-5. Specifically, regulates growth cone filopodial protrusion polarity, and thus migration, by promoting F-actin polarization and by restricting plus-end microtubule accumulation in the growth cone. Probably downstream of mab-20/Sema2a and mab-20 receptor plx-2, regulates the guidance of DD/VD neuron axons by modulating fln-1 interaction with F-actin which results in the remodeling of the actin cytoskeleton. In hermaphrodites, involved in sex myoblast (SM) migration by regulating the gonad-dependent repulsion of SMs. In neurons, required for the polarized sorting of axonal proteins. In PLM neuron, regulates innexin unc-9 gap junction turnover by suppressing unc-9 transport out of gap junctions. Plays a role in locomotion and egg-laying. Functionally, in PLM neuron, regulates innexin unc-9 gap junction turnover by suppressing unc-9 transport out of gap junctions. The protein is Protein unc-33 of Caenorhabditis elegans.